Reading from the N-terminus, the 111-residue chain is Large ribosomal subunit protein uL29 (111 aa).

A large ribosomal subunit protein uL29 region spans residues 1–85 (MTVAKELRQK…TKKTNEAAVN (85 aa)). Residues 86–111 (AWKQHLEANKAKLLKSRAKREDASKK) are unknown.

The protein belongs to the universal ribosomal protein uL29 family.

The sequence is that of Large ribosomal subunit protein uL29 from Mycoplasma pneumoniae (strain ATCC 29342 / M129 / Subtype 1) (Mycoplasmoides pneumoniae).